We begin with the raw amino-acid sequence, 117 residues long: Large ribosomal subunit protein uL24 (117 aa).

The protein belongs to the universal ribosomal protein uL24 family. As to quaternary structure, part of the 50S ribosomal subunit.

Functionally, one of two assembly initiator proteins, it binds directly to the 5'-end of the 23S rRNA, where it nucleates assembly of the 50S subunit. In terms of biological role, located at the polypeptide exit tunnel on the outside of the subunit. This chain is Large ribosomal subunit protein uL24, found in Methanothermobacter thermautotrophicus (strain ATCC 29096 / DSM 1053 / JCM 10044 / NBRC 100330 / Delta H) (Methanobacterium thermoautotrophicum).